Consider the following 159-residue polypeptide: 2-C-methyl-D-erythritol 2,4-cyclodiphosphate synthase (159 aa).

A divalent metal cation-binding residues include Asp10 and His12. 4-CDP-2-C-methyl-D-erythritol 2-phosphate contacts are provided by residues Asp10 to His12 and His36 to Ser37. His44 contacts a divalent metal cation. 4-CDP-2-C-methyl-D-erythritol 2-phosphate is bound by residues Asp58 to Gly60, Thr134 to Glu137, Phe141, and Arg144.

It belongs to the IspF family. In terms of assembly, homotrimer. A divalent metal cation is required as a cofactor.

It catalyses the reaction 4-CDP-2-C-methyl-D-erythritol 2-phosphate = 2-C-methyl-D-erythritol 2,4-cyclic diphosphate + CMP. Its pathway is isoprenoid biosynthesis; isopentenyl diphosphate biosynthesis via DXP pathway; isopentenyl diphosphate from 1-deoxy-D-xylulose 5-phosphate: step 4/6. Its function is as follows. Involved in the biosynthesis of isopentenyl diphosphate (IPP) and dimethylallyl diphosphate (DMAPP), two major building blocks of isoprenoid compounds. Catalyzes the conversion of 4-diphosphocytidyl-2-C-methyl-D-erythritol 2-phosphate (CDP-ME2P) to 2-C-methyl-D-erythritol 2,4-cyclodiphosphate (ME-CPP) with a corresponding release of cytidine 5-monophosphate (CMP). The polypeptide is 2-C-methyl-D-erythritol 2,4-cyclodiphosphate synthase (Roseobacter denitrificans (strain ATCC 33942 / OCh 114) (Erythrobacter sp. (strain OCh 114))).